An 820-amino-acid chain; its full sequence is Nuclear pore complex protein Nup93 (820 aa).

Belongs to the nucleoporin interacting component (NIC) family.

The protein localises to the nucleus membrane. It localises to the nucleus. It is found in the nuclear pore complex. Its function is as follows. Plays a role in the nuclear pore complex (NPC) assembly and/or maintenance. The protein is Nuclear pore complex protein Nup93 (dye) of Danio rerio (Zebrafish).